Here is a 367-residue protein sequence, read N- to C-terminus: 3-dehydroquinate synthase (367 aa).

NAD(+) is bound by residues 72 to 77 (DGENYK), 106 to 110 (GVIGD), 130 to 131 (TT), lysine 143, lysine 152, and 170 to 173 (FLST). Zn(2+)-binding residues include glutamate 185, histidine 248, and histidine 265.

This sequence belongs to the sugar phosphate cyclases superfamily. Dehydroquinate synthase family. Co(2+) serves as cofactor. Requires Zn(2+) as cofactor. The cofactor is NAD(+).

It is found in the cytoplasm. It catalyses the reaction 7-phospho-2-dehydro-3-deoxy-D-arabino-heptonate = 3-dehydroquinate + phosphate. It participates in metabolic intermediate biosynthesis; chorismate biosynthesis; chorismate from D-erythrose 4-phosphate and phosphoenolpyruvate: step 2/7. Catalyzes the conversion of 3-deoxy-D-arabino-heptulosonate 7-phosphate (DAHP) to dehydroquinate (DHQ). The chain is 3-dehydroquinate synthase from Buchnera aphidicola subsp. Cinara cedri (strain Cc).